A 1003-amino-acid polypeptide reads, in one-letter code: Glycine--tRNA ligase (1003 aa).

The glycine--tRNA ligase alpha subunit stretch occupies residues 1 to 310; that stretch reads MSSQPLTLQD…VTAKQIPHIC (310 aa). Residues 311–1003 form a glycine--tRNA ligase beta subunit region; the sequence is QDEDFLLEIG…CFGFYAWDAL (693 aa).

Belongs to the class-II aminoacyl-tRNA synthetase family.

It localises to the cytoplasm. The catalysed reaction is tRNA(Gly) + glycine + ATP = glycyl-tRNA(Gly) + AMP + diphosphate. The polypeptide is Glycine--tRNA ligase (glyQS) (Chlamydia muridarum (strain MoPn / Nigg)).